The following is a 448-amino-acid chain: Deoxyguanosinetriphosphate triphosphohydrolase-like protein (448 aa).

The segment at 1–26 (MQINSSWQERFLADPPREKDHRPPFR) is disordered. The segment covering 11-26 (FLADPPREKDHRPPFR) has biased composition (basic and acidic residues). An HD domain is found at 59–272 (RLTHSLEVAQ…MELADDIAYA (214 aa)).

It belongs to the dGTPase family. Type 2 subfamily.

The polypeptide is Deoxyguanosinetriphosphate triphosphohydrolase-like protein (Histophilus somni (strain 129Pt) (Haemophilus somnus)).